The primary structure comprises 131 residues: Glycine cleavage system H protein (131 aa).

The Lipoyl-binding domain maps to 24–106 (RVTVGISDHA…YGDGWMYVVE (83 aa)). Lys65 bears the N6-lipoyllysine mark.

It belongs to the GcvH family. As to quaternary structure, the glycine cleavage system is composed of four proteins: P, T, L and H. (R)-lipoate serves as cofactor.

In terms of biological role, the glycine cleavage system catalyzes the degradation of glycine. The H protein shuttles the methylamine group of glycine from the P protein to the T protein. This Stenotrophomonas maltophilia (strain R551-3) protein is Glycine cleavage system H protein.